The following is a 58-amino-acid chain: ATP synthase F(0) complex subunit k, mitochondrial (58 aa).

N6-acetyllysine; partial occurs at positions 16 and 17. Residues 23 to 45 form a helical membrane-spanning segment; that stretch reads TLTGRMNCVLATYGSIALIVLYF.

As to quaternary structure, component of the ATP synthase complex composed at least of ATP5F1A/subunit alpha, ATP5F1B/subunit beta, ATP5MC1/subunit c (homooctomer), MT-ATP6/subunit a, MT-ATP8/subunit 8, ATP5ME/subunit e, ATP5MF/subunit f, ATP5MG/subunit g, ATP5MK/subunit k, ATP5MJ/subunit j, ATP5F1C/subunit gamma, ATP5F1D/subunit delta, ATP5F1E/subunit epsilon, ATP5PF/subunit F6, ATP5PB/subunit b, ATP5PD/subunit d, ATP5PO/subunit OSCP. ATP synthase complex consists of a soluble F(1) head domain (subunits alpha(3) and beta(3)) - the catalytic core - and a membrane F(0) domain - the membrane proton channel (subunits c, a, 8, e, f, g, k and j). These two domains are linked by a central stalk (subunits gamma, delta, and epsilon) rotating inside the F1 region and a stationary peripheral stalk (subunits F6, b, d, and OSCP). The ATP synthase complex/complex V exists as a monomeric and a dimeric supercomplex that helps shape mitochondrial cristae to optimize proton flow.

It localises to the mitochondrion membrane. Functionally, subunit k, of the mitochondrial membrane ATP synthase complex (F(1)F(0) ATP synthase or Complex V) that produces ATP from ADP in the presence of a proton gradient across the membrane which is generated by electron transport complexes of the respiratory chain. ATP synthase complex consist of a soluble F(1) head domain - the catalytic core - and a membrane F(1) domain - the membrane proton channel. These two domains are linked by a central stalk rotating inside the F(1) region and a stationary peripheral stalk. During catalysis, ATP synthesis in the catalytic domain of F(1) is coupled via a rotary mechanism of the central stalk subunits to proton translocation. In vivo, can only synthesize ATP although its ATP hydrolase activity can be activated artificially in vitro. Part of the complex F(0) domain. Required for dimerization of the ATP synthase complex and as such regulates ATP synthesis in the mitochondria. The sequence is that of ATP synthase F(0) complex subunit k, mitochondrial from Bos taurus (Bovine).